The primary structure comprises 196 residues: Gastrula zinc finger protein xLCGF3.1 (196 aa).

7 C2H2-type zinc fingers span residues 6 to 28 (FMCTKCGKCLSTKQKLNLHHMTH), 34 to 56 (FTCTECGKGFSRNDYLKIHQTIH), 62 to 84 (FTCIECGKGFSINRTLKLHYMTH), 90 to 112 (FTCTECSKGFSTKRDLEIHQTMH), 118 to 140 (LTCTECSKGFSTKHKLSIHQRVH), 146 to 168 (FTCTECNKGFSRNDHLQIHQTVH), and 174 to 196 (FTCTECSKCFSRKELLKIHQIVH).

Belongs to the krueppel C2H2-type zinc-finger protein family.

It is found in the nucleus. Its function is as follows. May be involved in transcriptional regulation. The polypeptide is Gastrula zinc finger protein xLCGF3.1 (Xenopus laevis (African clawed frog)).